A 449-amino-acid polypeptide reads, in one-letter code: 3-phosphoshikimate 1-carboxyvinyltransferase (449 aa).

Residues K28, S29, and R33 each contribute to the 3-phosphoshikimate site. K28 contacts phosphoenolpyruvate. Residues G105 and R133 each contribute to the phosphoenolpyruvate site. 3-phosphoshikimate contacts are provided by S179, Q181, D332, and K359. Q181 lines the phosphoenolpyruvate pocket. Residue D332 is the Proton acceptor of the active site. 2 residues coordinate phosphoenolpyruvate: R363 and R406.

This sequence belongs to the EPSP synthase family. Monomer.

The protein resides in the cytoplasm. It catalyses the reaction 3-phosphoshikimate + phosphoenolpyruvate = 5-O-(1-carboxyvinyl)-3-phosphoshikimate + phosphate. Its pathway is metabolic intermediate biosynthesis; chorismate biosynthesis; chorismate from D-erythrose 4-phosphate and phosphoenolpyruvate: step 6/7. Functionally, catalyzes the transfer of the enolpyruvyl moiety of phosphoenolpyruvate (PEP) to the 5-hydroxyl of shikimate-3-phosphate (S3P) to produce enolpyruvyl shikimate-3-phosphate and inorganic phosphate. In Nitrobacter hamburgensis (strain DSM 10229 / NCIMB 13809 / X14), this protein is 3-phosphoshikimate 1-carboxyvinyltransferase.